We begin with the raw amino-acid sequence, 355 residues long: MRVPRSQPWGLALLLLLLPGTLRAAESHRSLLYHFTAVSNPASGTPAFSLSGWLGPQQYLSYNNLRAQAEPYGAWVWESQVSWYWEKETTDLRDKEKLFLEALKVFGDRDSYTLQGLLGCELGPDNVSVPMAKYALNGEEFMEFDPKLGIWDGDWPEARTIGIKWMKHPEAVNKEKTFLLYSCPHRLLGHLERGRGNLEWKEPPSMRLKARPGNPGFSVLTCSAFSFYPPELQLRFLRNGLAAGSGEGDVVPNGDGSFYAWSSLTVKSGDEHQYRCWVQHVGPAQPLTVELESPAKSSVPVIGISIGFLLLMTVAAGGALLWRRRKGLPAPWIAFRGDDIGALLPTPGLSKDAES.

An N-terminal signal peptide occupies residues 1–24 (MRVPRSQPWGLALLLLLLPGTLRA). The interval 25–111 (AESHRSLLYH…ALKVFGDRDS (87 aa)) is alpha-1. Over 25-300 (AESHRSLLYH…LESPAKSSVP (276 aa)) the chain is Extracellular. An alpha-2 region spans residues 112 to 201 (YTLQGLLGCE…ERGRGNLEWK (90 aa)). N-linked (GlcNAc...) asparagine glycosylation is present at Asn-126. Positions 202–291 (EPPSMRLKAR…GPAQPLTVEL (90 aa)) are alpha-3. Residues 203-292 (PPSMRLKARP…PAQPLTVELE (90 aa)) form the Ig-like C1-type domain. Residues Cys-222 and Cys-276 are joined by a disulfide bond. The segment at 293–298 (SPAKSS) is connecting peptide. Residues 301–321 (VIGISIGFLLLMTVAAGGALL) traverse the membrane as a helical segment. The Cytoplasmic portion of the chain corresponds to 322 to 355 (WRRRKGLPAPWIAFRGDDIGALLPTPGLSKDAES).

Belongs to the immunoglobulin superfamily. As to quaternary structure, fcRn complex consists of two subunits: p51, and p14 which is equivalent to beta-2-microglobulin. It forms an MHC class I-like heterodimer. Interacts with albumin/ALB; this interaction regulates ALB homeostasis. Expressed in liver and mammary gland of non-lactating animals. Expressed in hepatocytes and in epithelial cells of portal bile ductuli. Not expressed in the brances of portal veins or hepatic arteries. Expressed in the epithelial cells of the acini and ducti in the mammary gland with expression emphasized at the apical side. Not expressed in blood vessels of mammary gland.

Its subcellular location is the cell membrane. It localises to the endosome membrane. In terms of biological role, cell surface receptor that transfers passive humoral immunity from the mother to the newborn. Binds to the Fc region of monomeric immunoglobulin gamma and mediates its selective uptake from milk. IgG in the milk is bound at the apical surface of the intestinal epithelium. The resultant FcRn-IgG complexes are transcytosed across the intestinal epithelium and IgG is released from FcRn into blood or tissue fluids. Throughout life, contributes to effective humoral immunity by recycling IgG and extending its half-life in the circulation. Mechanistically, monomeric IgG binding to FcRn in acidic endosomes of endothelial and hematopoietic cells recycles IgG to the cell surface where it is released into the circulation. In addition of IgG, regulates homeostasis of the other most abundant circulating protein albumin/ALB. This Camelus dromedarius (Dromedary) protein is IgG receptor FcRn large subunit p51.